The following is a 465-amino-acid chain: E3 ubiquitin-protein ligase parkin (465 aa).

The 76-residue stretch at 1-76 folds into the Ubiquitin-like domain; the sequence is MIVFVRFNSS…VHIVQRPQRK (76 aa). Ser-65 carries the post-translational modification Phosphoserine; by PINK1. The segment at 71 to 96 is disordered; that stretch reads QRPQRKSHETNASGGDKPQSTPEGSI. The segment at 77–237 is necessary for PINK1-dependent localization to mitochondria; the sequence is SHETNASGGD…LITNNSRSIP (161 aa). The residue at position 80 (Thr-80) is a Phosphothreonine. Residues 80–93 are compositionally biased toward polar residues; sequence TNASGGDKPQSTPE. The RING-type 0; atypical zinc-finger motif lies at 141–225; it reads PTYHSFFVYC…PTSDKDTSVA (85 aa). Thr-175 bears the Phosphothreonine; by PINK1 mark. The tract at residues 204 to 238 is SYT11 binding 1; that stretch reads TRAEFFFKCGAHPTSDKDTSVALNLITNNSRSIPC. Thr-217 bears the Phosphothreonine mark. The TRIAD supradomain stretch occupies residues 234-465; sequence RSIPCIACTD…ACMGDHWFDV (232 aa). Zn(2+) is bound by residues Cys-238, Cys-241, Cys-253, His-257, Cys-260, Cys-263, Cys-289, Cys-293, Cys-332, and Cys-337. The RING-type 1 zinc-finger motif lies at 238–293; it reads CIACTDVRNPVLVFQCNHRHVICLDCFHLYCVTRLNDRQFVHDAQLGYSLPCVAGC. Residues 257–293 form an SYT11 binding 2 region; sequence HVICLDCFHLYCVTRLNDRQFVHDAQLGYSLPCVAGC. The IBR-type zinc-finger motif lies at 313 to 377; the sequence is NRYQQYGAEE…CKEAYHEGEC (65 aa). Lys-349 is covalently cross-linked (Glycyl lysine isopeptide (Lys-Gly) (interchain with G-Cter in ISG15)). Zn(2+) is bound by residues Cys-352, Cys-360, Cys-365, and Cys-368. Residue Lys-369 forms a Glycyl lysine isopeptide (Lys-Gly) (interchain with G-Cter in ISG15) linkage. Residues His-373 and Cys-377 each coordinate Zn(2+). Residues 378-410 are REP; sequence DSMFEASGATSQAYRVDQRAAEQARWEEASKET. Zn(2+) contacts are provided by Cys-418 and Cys-421. Residues 418–449 form an RING-type 2; atypical zinc finger; it reads CPRCNVPIEKNGGCMHMKCPQPQCKLEWCWNC. The active site involves Cys-431. The Zn(2+) site is built by Cys-436, Cys-441, Cys-446, Cys-449, Cys-457, and His-461.

This sequence belongs to the RBR family. Parkin subfamily. Forms an E3 ubiquitin ligase complex with UBE2L3 or UBE2L6. Mediates 'Lys-63'-linked polyubiquitination by associating with UBE2V1. Part of a SCF-like complex, consisting of PRKN, CUL1 and FBXW7. Interacts with SNCAIP. Binds to the C2A and C2B domains of SYT11. Interacts and regulates the turnover of SEPTIN5. Part of a complex, including STUB1, HSP70 and GPR37. The amount of STUB1 in the complex increases during ER stress. STUB1 promotes the dissociation of HSP70 from PRKN and GPR37, thus facilitating PRKN-mediated GPR37 ubiquitination. HSP70 transiently associates with unfolded GPR37 and inhibits the E3 activity of PRKN, whereas, STUB1 enhances the E3 activity of PRKN through promotion of dissociation of HSP70 from PRKN-GPR37 complexes. Interacts with PSMD4 and PACRG. Interacts with LRRK2. Interacts with RANBP2. Interacts with SUMO1 but not SUMO2, which promotes nuclear localization and autoubiquitination. Interacts (via first RING-type domain) with AIMP2 (via N-terminus). Interacts with PSMA7 and RNF41. Interacts with PINK1. Forms a complex with PINK1 and PARK7. Interacts with CHPF, the interaction with isoform 2 may facilitate PRKN transport into the mitochondria. Interacts with MFN2 (phosphorylated), promotes PRKN localization in dysfunctional depolarized mitochondria. Interacts with FBXO7; this promotes translocation to dysfunctional depolarized mitochondria. Interacts with ZNF746. Interacts with heat shock protein 70 family members, including HSPA1L, HSPA1A and HSPA8; interaction HSPA1L promotes translocation to damaged mitochondria. Interacts with BAG4 and, to a lesser extent, BAG5; interaction with BAG4 inhibits translocation to damaged mitochondria. Forms a complex with PRKN and PARK7. Interacts with AMBRA1. Auto-ubiquitinates in an E2-dependent manner leading to its own degradation. Also polyubiquitinated by RNF41 for proteasomal degradation. In terms of processing, S-nitrosylated. Post-translationally, phosphorylated. Activation requires phosphorylation at Ser-65 by PINK1 and binding to PINK1 phosphorylated ubiquitin. Phosphorylation at Thr-175 by PINK1 and at Thr-217 is important for mitochondrial localization. Largely confined to neuronal elements, including fibers and neuropil. Highly expressed at the forebrain level, in pyramidal cells of layer V, in various cortical regions and cerebellum. Expressed in the nucleus of diagonal band of Broca, nucleus basalis, bed nucleus of the stria terminalis, and olfactory tubercle. Moderate expression is seen in most neurons of the subthalamic nucleus, heart, skeletal muscle and testis. Moderate expression was found in frontal cortex, parietal cortex, cerebellum, heart, skeletal muscle and testis.

The protein resides in the cytoplasm. It localises to the cytosol. It is found in the nucleus. The protein localises to the endoplasmic reticulum. Its subcellular location is the mitochondrion. The protein resides in the mitochondrion outer membrane. It localises to the cell projection. It is found in the neuron projection. The protein localises to the postsynaptic density. Its subcellular location is the presynapse. It catalyses the reaction [E2 ubiquitin-conjugating enzyme]-S-ubiquitinyl-L-cysteine + [acceptor protein]-L-lysine = [E2 ubiquitin-conjugating enzyme]-L-cysteine + [acceptor protein]-N(6)-ubiquitinyl-L-lysine.. Its pathway is protein modification; protein ubiquitination. Its activity is regulated as follows. In the autoinhibited state the side chain of Phe-463 inserts into a hydrophobic groove in RING-0, occluding the ubiquitin acceptor site Cys-431, whereas the REP repressor element binds RING-1 and blocks its E2-binding site. Activation of PRKN requires 2 steps: (1) phosphorylation at Ser-65 by PINK1 and (2) binding to phosphorylated ubiquitin, leading to unlock repression of the catalytic Cys-431 by the RING-0 region via an allosteric mechanism and converting PRKN to its fully-active form. According to another report, phosphorylation at Ser-65 by PINK1 is not essential for activation and only binding to phosphorylated ubiquitin is essential to unlock repression. In addition, ISG15 conjugation positively regulates its ubiquitin E3 ligase activity by suppressing the intramolecular interaction that maintains its autoinhibited conformation. Functionally, functions within a multiprotein E3 ubiquitin ligase complex, catalyzing the covalent attachment of ubiquitin moieties onto substrate proteins. Substrates include SYT11 and VDAC1. Other substrates are BCL2, CCNE1, GPR37, RHOT1/MIRO1, MFN1, MFN2, STUB1, SNCAIP, SEPTIN5, TOMM20, USP30, ZNF746, MIRO1 and AIMP2. Mediates monoubiquitination as well as 'Lys-6', 'Lys-11', 'Lys-48'-linked and 'Lys-63'-linked polyubiquitination of substrates depending on the context. Participates in the removal and/or detoxification of abnormally folded or damaged protein by mediating 'Lys-63'-linked polyubiquitination of misfolded proteins such as PARK7: 'Lys-63'-linked polyubiquitinated misfolded proteins are then recognized by HDAC6, leading to their recruitment to aggresomes, followed by degradation. Mediates 'Lys-63'-linked polyubiquitination of a 22 kDa O-linked glycosylated isoform of SNCAIP, possibly playing a role in Lewy-body formation. Mediates monoubiquitination of BCL2, thereby acting as a positive regulator of autophagy. Protects against mitochondrial dysfunction during cellular stress, by acting downstream of PINK1 to coordinate mitochondrial quality control mechanisms that remove and replace dysfunctional mitochondrial components. Depending on the severity of mitochondrial damage and/or dysfunction, activity ranges from preventing apoptosis and stimulating mitochondrial biogenesis to regulating mitochondrial dynamics and eliminating severely damaged mitochondria via mitophagy. Activation and recruitment onto the outer membrane of damaged/dysfunctional mitochondria (OMM) requires PINK1-mediated phosphorylation of both PRKN and ubiquitin. After mitochondrial damage, functions with PINK1 to mediate the decision between mitophagy or preventing apoptosis by inducing either the poly- or monoubiquitination of VDAC1, respectively; polyubiquitination of VDAC1 promotes mitophagy, while monoubiquitination of VDAC1 decreases mitochondrial calcium influx which ultimately inhibits apoptosis. When cellular stress results in irreversible mitochondrial damage, promotes the autophagic degradation of dysfunctional depolarized mitochondria (mitophagy) by promoting the ubiquitination of mitochondrial proteins such as TOMM20, RHOT1/MIRO1, MFN1 and USP30. Preferentially assembles 'Lys-6'-, 'Lys-11'- and 'Lys-63'-linked polyubiquitin chains, leading to mitophagy. The PINK1-PRKN pathway also promotes fission of damaged mitochondria by PINK1-mediated phosphorylation which promotes the PRKN-dependent degradation of mitochondrial proteins involved in fission such as MFN2. This prevents the refusion of unhealthy mitochondria with the mitochondrial network or initiates mitochondrial fragmentation facilitating their later engulfment by autophagosomes. Regulates motility of damaged mitochondria via the ubiquitination and subsequent degradation of MIRO1 and MIRO2; in motor neurons, this likely inhibits mitochondrial intracellular anterograde transport along the axons which probably increases the chance of the mitochondria undergoing mitophagy in the soma. Involved in mitochondrial biogenesis via the 'Lys-48'-linked polyubiquitination of transcriptional repressor ZNF746/PARIS which leads to its subsequent proteasomal degradation and allows activation of the transcription factor PPARGC1A. Limits the production of reactive oxygen species (ROS). Regulates cyclin-E during neuronal apoptosis. In collaboration with CHPF isoform 2, may enhance cell viability and protect cells from oxidative stress. Independently of its ubiquitin ligase activity, protects from apoptosis by the transcriptional repression of p53/TP53. May protect neurons against alpha synuclein toxicity, proteasomal dysfunction, GPR37 accumulation, and kainate-induced excitotoxicity. May play a role in controlling neurotransmitter trafficking at the presynaptic terminal and in calcium-dependent exocytosis. May represent a tumor suppressor gene. The sequence is that of E3 ubiquitin-protein ligase parkin from Rattus norvegicus (Rat).